A 532-amino-acid polypeptide reads, in one-letter code: Phosphoenolpyruvate carboxylase (532 aa).

It belongs to the PEPCase type 2 family. Homotetramer. Requires Mg(2+) as cofactor.

It catalyses the reaction oxaloacetate + phosphate = phosphoenolpyruvate + hydrogencarbonate. Its function is as follows. Catalyzes the irreversible beta-carboxylation of phosphoenolpyruvate (PEP) to form oxaloacetate (OAA), a four-carbon dicarboxylic acid source for the tricarboxylic acid cycle. The protein is Phosphoenolpyruvate carboxylase of Methanopyrus kandleri (strain AV19 / DSM 6324 / JCM 9639 / NBRC 100938).